A 208-amino-acid chain; its full sequence is FMN-dependent NADH:quinone oxidoreductase 1 (208 aa).

FMN-binding positions include Ser10, 15–17, and 97–100; these read SES and MWNF.

This sequence belongs to the azoreductase type 1 family. Homodimer. It depends on FMN as a cofactor.

It catalyses the reaction 2 a quinone + NADH + H(+) = 2 a 1,4-benzosemiquinone + NAD(+). The enzyme catalyses N,N-dimethyl-1,4-phenylenediamine + anthranilate + 2 NAD(+) = 2-(4-dimethylaminophenyl)diazenylbenzoate + 2 NADH + 2 H(+). Functionally, quinone reductase that provides resistance to thiol-specific stress caused by electrophilic quinones. Its function is as follows. Also exhibits azoreductase activity. Catalyzes the reductive cleavage of the azo bond in aromatic azo compounds to the corresponding amines. This is FMN-dependent NADH:quinone oxidoreductase 1 from Bradyrhizobium diazoefficiens (strain JCM 10833 / BCRC 13528 / IAM 13628 / NBRC 14792 / USDA 110).